The sequence spans 207 residues: MTDPQIHLDLMPHGIADEFIVGVDEVGRGPLVGDVVAAAVILPKGCELLLKDSKKLSESKRELIAHQIQQEAIDFCIATASPDEIDSLNILHATMLAMKRAVEGLNNPIKKVLVDGNRCPNVPYECEAIVKGDGKVPVISAASILAKVHRDQQMQVLHEAYPEYGFDAHKGYPTKLHLEKLSQHGLIPGYRRSFKPVKNILQLLEKI.

The region spanning 18 to 206 (EFIVGVDEVG…VKNILQLLEK (189 aa)) is the RNase H type-2 domain. Residues aspartate 24, glutamate 25, and aspartate 115 each contribute to the a divalent metal cation site.

Belongs to the RNase HII family. Requires Mn(2+) as cofactor. It depends on Mg(2+) as a cofactor.

The protein resides in the cytoplasm. It catalyses the reaction Endonucleolytic cleavage to 5'-phosphomonoester.. In terms of biological role, endonuclease that specifically degrades the RNA of RNA-DNA hybrids. The chain is Ribonuclease HII from Hydrogenovibrio crunogenus (strain DSM 25203 / XCL-2) (Thiomicrospira crunogena).